Consider the following 174-residue polypeptide: Transcription antitermination protein NusB (174 aa).

Belongs to the NusB family.

In terms of biological role, involved in transcription antitermination. Required for transcription of ribosomal RNA (rRNA) genes. Binds specifically to the boxA antiterminator sequence of the ribosomal RNA (rrn) operons. The polypeptide is Transcription antitermination protein NusB (Rhodopseudomonas palustris (strain ATCC BAA-98 / CGA009)).